A 1071-amino-acid chain; its full sequence is ATP-dependent helicase/deoxyribonuclease subunit B (1071 aa).

Belongs to the helicase family. AddB/RexB type 2 subfamily. Heterodimer of AddA and RexB. Requires Mg(2+) as cofactor.

Its function is as follows. The heterodimer acts as both an ATP-dependent DNA helicase and an ATP-dependent, dual-direction single-stranded exonuclease. Recognizes the chi site generating a DNA molecule suitable for the initiation of homologous recombination. This subunit has 5' -&gt; 3' nuclease activity but not helicase activity. The polypeptide is ATP-dependent helicase/deoxyribonuclease subunit B (Streptococcus pyogenes serotype M12 (strain MGAS2096)).